The primary structure comprises 450 residues: Glutamyl-tRNA reductase (450 aa).

Residues 45-48 (TCNR), Ser-107, 112-114 (ERE), and Gln-118 contribute to the substrate site. The active-site Nucleophile is the Cys-46. 196 to 201 (GTGAYA) contributes to the NADP(+) binding site.

This sequence belongs to the glutamyl-tRNA reductase family. As to quaternary structure, homodimer.

It catalyses the reaction (S)-4-amino-5-oxopentanoate + tRNA(Glu) + NADP(+) = L-glutamyl-tRNA(Glu) + NADPH + H(+). The protein operates within porphyrin-containing compound metabolism; protoporphyrin-IX biosynthesis; 5-aminolevulinate from L-glutamyl-tRNA(Glu): step 1/2. Functionally, catalyzes the NADPH-dependent reduction of glutamyl-tRNA(Glu) to glutamate 1-semialdehyde (GSA). In Micrococcus luteus (strain ATCC 4698 / DSM 20030 / JCM 1464 / CCM 169 / CCUG 5858 / IAM 1056 / NBRC 3333 / NCIMB 9278 / NCTC 2665 / VKM Ac-2230) (Micrococcus lysodeikticus), this protein is Glutamyl-tRNA reductase.